The sequence spans 522 residues: Leucine-rich repeat transmembrane neuronal protein 1 (522 aa).

The first 34 residues, Met-1–Ala-34, serve as a signal peptide directing secretion. The LRRNT domain occupies Ala-35–Asn-63. At Ala-35–Lys-427 the chain is on the extracellular side. Residues Asn-56 and Asn-63 are each glycosylated (N-linked (GlcNAc...) asparagine). LRR repeat units lie at residues Leu-64–Gly-87, Met-89–Lys-111, Leu-112–Pro-135, Met-136–Gly-159, Arg-161–Asp-183, Cys-184–Gly-207, Phe-209–Arg-231, Ile-233–Val-255, Trp-256–Thr-278, and Pro-280–Ser-302. A glycan (N-linked (GlcNAc...) asparagine) is linked at Asn-130. Residues Asn-314–Asp-365 enclose the LRRCT domain. Asn-381 is a glycosylation site (N-linked (GlcNAc...) asparagine). The chain crosses the membrane as a helical span at residues Val-428–Val-448. Residues Ser-449–Val-522 lie on the Cytoplasmic side of the membrane.

The protein belongs to the LRRTM family. Expressed predominantly in the nervous system by postmitotic neurons, but also in some non-neuronal tissues. In adult brain expression is most prominent in the forebraain, particularly in the thalamus and in the cortical areas including hippocampus, piriform and posterior cingulate.

The protein localises to the cell membrane. It is found in the postsynaptic cell membrane. Exhibits strong synaptogenic activity, restricted to excitatory presynaptic differentiation, acting at both pre- and postsynaptic level. This Mus musculus (Mouse) protein is Leucine-rich repeat transmembrane neuronal protein 1 (Lrrtm1).